We begin with the raw amino-acid sequence, 229 residues long: 3-dehydroquinate dehydratase (229 aa).

3-dehydroquinate is bound by residues 33–35 and Arg-65; that span reads EWR. Catalysis depends on His-121, which acts as the Proton donor/acceptor. Lys-146 acts as the Schiff-base intermediate with substrate in catalysis. 3 residues coordinate 3-dehydroquinate: Arg-188, Ser-207, and Gln-211.

This sequence belongs to the type-I 3-dehydroquinase family. As to quaternary structure, homodimer.

The catalysed reaction is 3-dehydroquinate = 3-dehydroshikimate + H2O. It participates in metabolic intermediate biosynthesis; chorismate biosynthesis; chorismate from D-erythrose 4-phosphate and phosphoenolpyruvate: step 3/7. Involved in the third step of the chorismate pathway, which leads to the biosynthesis of aromatic amino acids. Catalyzes the cis-dehydration of 3-dehydroquinate (DHQ) and introduces the first double bond of the aromatic ring to yield 3-dehydroshikimate. In Lactococcus lactis subsp. cremoris (strain SK11), this protein is 3-dehydroquinate dehydratase.